The primary structure comprises 657 residues: Probable Xaa-Pro aminopeptidase P (657 aa).

Residues Asp453, Asp464, Glu562, and Glu576 each coordinate Mn(2+).

Belongs to the peptidase M24B family. Requires Mn(2+) as cofactor.

The catalysed reaction is Release of any N-terminal amino acid, including proline, that is linked to proline, even from a dipeptide or tripeptide.. Functionally, catalyzes the removal of a penultimate prolyl residue from the N-termini of peptides. In Talaromyces stipitatus (strain ATCC 10500 / CBS 375.48 / QM 6759 / NRRL 1006) (Penicillium stipitatum), this protein is Probable Xaa-Pro aminopeptidase P (ampp).